Consider the following 66-residue polypeptide: COP-associated protein (66 aa).

The HMA domain maps to 1–66 (MKVTFQVPSI…ALLDAGQEVV (66 aa)). Residues C12 and C15 each coordinate Cu cation.

Functionally, part of a cation-transporting system which is associated with copper export out of the H.pylori cells. This is COP-associated protein (copP) from Helicobacter pylori (strain J99 / ATCC 700824) (Campylobacter pylori J99).